Here is a 335-residue protein sequence, read N- to C-terminus: Cytoskeleton protein RodZ (335 aa).

At 1-111 (MNTEATHDQN…LGKRRKKRDG (111 aa)) the chain is on the cytoplasmic side. One can recognise an HTH cro/C1-type domain in the interval 19 to 71 (LRNAREQLGLSQQAVAERLCLKVSTVRDIEEDKAPADLASTFLRGYIRSYARL). The segment at residues 30-49 (QQAVAERLCLKVSTVRDIEE) is a DNA-binding region (H-T-H motif). A helical; Signal-anchor for type II membrane protein membrane pass occupies residues 112–132 (WLMTFTWLVLFVVIGLSGAWW). Over 133 to 335 (WQDHKAQQEE…TLNAEQSPAQ (203 aa)) the chain is Periplasmic. The segment covering 148 to 164 (DQSSAELNNNQSQSVPL) has biased composition (polar residues). Residues 148–244 (DQSSAELNNN…PLPTDQAGVT (97 aa)) form a disordered region. 2 stretches are compositionally biased toward low complexity: residues 165 to 205 (DTST…DPQQ) and 217 to 239 (DTAATPAPAATTTPDSAAPLPTD).

It belongs to the RodZ family.

It localises to the cell inner membrane. Cytoskeletal protein that is involved in cell-shape control through regulation of the length of the long axis. In Escherichia coli O81 (strain ED1a), this protein is Cytoskeleton protein RodZ.